Reading from the N-terminus, the 202-residue chain is Transmembrane 4 L6 family member 4 (202 aa).

At 1 to 9 (MCTGGCARC) the chain is on the cytoplasmic side. The chain crosses the membrane as a helical span at residues 10-30 (LGGTLIPLAVFAVLANILLFF). The Extracellular portion of the chain corresponds to 31-48 (PGGKVVDDNSHLSDEVWY). The helical transmembrane segment at 49–69 (FGGILGSGVLMIFPALVFLGL) threads the bilayer. The Cytoplasmic segment spans residues 70–93 (QNNDCCGCCGNESCGKRFAMFTST). Residues 94–114 (LFAVVGFLGAAYSFIVSAVSI) traverse the membrane as a helical segment. The Extracellular portion of the chain corresponds to 115–158 (NKGPKCFMTNNTWGYPFHDGDYLNDQALWSKCEEPRDVVPWNLT). Asparagine 156 carries N-linked (GlcNAc...) asparagine glycosylation. Residues 159–179 (LFSILLVIGGIQMVLCAIQVI) form a helical membrane-spanning segment. The Cytoplasmic segment spans residues 180–202 (NGLLGTLCGDCQCCGCCGGDRPV).

It belongs to the L6 tetraspanin family. Expressed in liver and testis. Up-regulated in regenerating liver after partial hepatectomy.

The protein localises to the membrane. In terms of biological role, regulates the adhesive and proliferative status of intestinal epithelial cells. Can mediate density-dependent cell proliferation. The chain is Transmembrane 4 L6 family member 4 (Tm4sf4) from Rattus norvegicus (Rat).